A 234-amino-acid polypeptide reads, in one-letter code: Orotidine 5'-phosphate decarboxylase (234 aa).

Substrate is bound by residues Asp11, Lys33, 60–69 (DLKFHDIPNT), Thr120, Arg181, Gln190, Gly210, and Arg211. Lys62 acts as the Proton donor in catalysis.

The protein belongs to the OMP decarboxylase family. Type 1 subfamily. Homodimer.

The catalysed reaction is orotidine 5'-phosphate + H(+) = UMP + CO2. It functions in the pathway pyrimidine metabolism; UMP biosynthesis via de novo pathway; UMP from orotate: step 2/2. In terms of biological role, catalyzes the decarboxylation of orotidine 5'-monophosphate (OMP) to uridine 5'-monophosphate (UMP). The sequence is that of Orotidine 5'-phosphate decarboxylase from Aliivibrio salmonicida (strain LFI1238) (Vibrio salmonicida (strain LFI1238)).